The chain runs to 750 residues: Tegument protein UL46 homolog (750 aa).

Disordered stretches follow at residues 437-484 (FCCP…SPRT), 525-593 (QRSD…DYMR), 610-669 (YTPY…EVVY), and 692-750 (SASR…VSSL). Over residues 465–484 (LRSSRQLPTSPPSNIVSPRT) the composition is skewed to polar residues. Residues 528-540 (DSSSSDNSTCSST) are compositionally biased toward low complexity. A compositionally biased stretch (polar residues) spans 541-553 (ETQYITLPSTPSP). 2 stretches are compositionally biased toward basic and acidic residues: residues 710–727 (VCRE…DGFI) and 739–750 (KHPDQTERVSSL).

It belongs to the herpesviridae HHV-1 VP11/12 protein family.

Its subcellular location is the virion tegument. It is found in the host cell membrane. Modulates alpha trans-inducing factor-dependent activation of alpha genes. This is Tegument protein UL46 homolog from Equine herpesvirus 1 (strain V592) (EHV-1).